Here is a 142-residue protein sequence, read N- to C-terminus: Endoribonuclease YbeY (142 aa).

Histidine 107, histidine 111, and aspartate 117 together coordinate Zn(2+).

Belongs to the endoribonuclease YbeY family. Zn(2+) serves as cofactor.

It localises to the cytoplasm. Functionally, single strand-specific metallo-endoribonuclease involved in late-stage 70S ribosome quality control and in maturation of the 3' terminus of the 16S rRNA. In Parabacteroides distasonis (strain ATCC 8503 / DSM 20701 / CIP 104284 / JCM 5825 / NCTC 11152), this protein is Endoribonuclease YbeY.